Consider the following 517-residue polypeptide: Probable bifunctional methylthioribulose-1-phosphate dehydratase/enolase-phosphatase E1 1 (517 aa).

The methylthioribulose-1-phosphate dehydratase stretch occupies residues 1–240 (MAAAALNGLK…AIKLYQLGLD (240 aa)). Cys-112 contributes to the substrate binding site. Zn(2+)-binding residues include His-130 and His-132. Glu-155 functions as the Proton donor/acceptor; for methylthioribulose-1-phosphate dehydratase activity in the catalytic mechanism. Residue His-205 participates in Zn(2+) binding. Residues 278 to 517 (IVLDIEGTTT…FKTITSFSDI (240 aa)) are enolase-phosphatase E1. The Mg(2+) site is built by Asp-281 and Glu-283. Substrate is bound by residues 416–417 (SS) and Lys-450. Asp-476 contacts Mg(2+).

It in the N-terminal section; belongs to the aldolase class II family. MtnB subfamily. The protein in the C-terminal section; belongs to the HAD-like hydrolase superfamily. MasA/MtnC family. Zn(2+) serves as cofactor. Requires Mg(2+) as cofactor.

It catalyses the reaction 5-(methylsulfanyl)-D-ribulose 1-phosphate = 5-methylsulfanyl-2,3-dioxopentyl phosphate + H2O. The catalysed reaction is 5-methylsulfanyl-2,3-dioxopentyl phosphate + H2O = 1,2-dihydroxy-5-(methylsulfanyl)pent-1-en-3-one + phosphate. The protein operates within amino-acid biosynthesis; L-methionine biosynthesis via salvage pathway; L-methionine from S-methyl-5-thio-alpha-D-ribose 1-phosphate: step 2/6. It participates in amino-acid biosynthesis; L-methionine biosynthesis via salvage pathway; L-methionine from S-methyl-5-thio-alpha-D-ribose 1-phosphate: step 3/6. Its pathway is amino-acid biosynthesis; L-methionine biosynthesis via salvage pathway; L-methionine from S-methyl-5-thio-alpha-D-ribose 1-phosphate: step 4/6. In Vitis vinifera (Grape), this protein is Probable bifunctional methylthioribulose-1-phosphate dehydratase/enolase-phosphatase E1 1.